Consider the following 853-residue polypeptide: Transforming growth factor beta receptor type 3 (853 aa).

The signal sequence occupies residues 1 to 23 (MAVTSHHMIPVMVVLMSACLATA). Residues 24 to 789 (GPEPSTRCEL…IFHGLDTLTV (766 aa)) lie on the Extracellular side of the membrane. Asn-37, Asn-144, and Asn-493 each carry an N-linked (GlcNAc...) asparagine glycan. Cys-55 and Cys-200 are oxidised to a cystine. A ZP domain is found at 456–730 (KCDHEKMVVA…PRCVTPDDAC (275 aa)). The interval 530–559 (SPGDSSGWPDGYEDLESGDNGFPGDGDEGE) is disordered. O-linked (Xyl...) (glycosaminoglycan) serine glycans are attached at residues Ser-535 and Ser-546. N-linked (GlcNAc...) asparagine glycans are attached at residues Asn-572, Asn-591, and Asn-698. Disulfide bonds link Cys-640/Cys-706, Cys-661/Cys-730, and Cys-711/Cys-723. Residues 737-751 (MIWTMMQNKKTFTKP) are interaction with TGF-beta ligand. The helical transmembrane segment at 790 to 811 (MGIAFAAFVIGALLTGALWYIY) threads the bilayer. Residues 812 to 853 (SHTGETARRQQVPTSPPASENSSAAHSIGSTQSTPCSSSSTA) lie on the Cytoplasmic side of the membrane. Polar residues predominate over residues 820–836 (RQQVPTSPPASENSSAA). The interval 820-853 (RQQVPTSPPASENSSAAHSIGSTQSTPCSSSSTA) is disordered. Low complexity predominate over residues 838–853 (SIGSTQSTPCSSSSTA). Thr-842 bears the Phosphothreonine mark.

As to quaternary structure, forms homodimers and homooligomers. Interacts with DYNLT4. Interacts with integrin ITGA5:ITGB1; this interaction promotes the internalization and trafficking of ITGA5:ITGB1 into endocytic vesicles. Interacts with TGFB1, BMP2, BMP5, BMP7 or GDF5 and inhibin A via the ligand binding domains. Interacts with ALK3/BMPR1A; this interaction results in the cell surface retention of BMPR1A. Interacts with ALK6/BMPR1B; this interaction enhances BMPR1B-mediated stimulation of the BMP signaling pathway. Interacts with the scaffolding protein beta-arrestin2/ARRB2; this interaction mediates internalization of TGFBR3 and thus regulates migration, actin cytoskeleton and activation of CDC42. Post-translationally, extensively modified by glycosaminoglycan groups (GAG). Phosphorylated in the cytoplasmic domain by the type II receptor TGFBR2 at THR-842 to mediate recruitment of ARRB2 and subsequent internalization of TGFBR2 and TGFBR3.

The protein localises to the cell membrane. The protein resides in the secreted. Its subcellular location is the extracellular space. It is found in the extracellular matrix. Cell surface receptor that regulates diverse cellular processes including cell proliferation, differentiation, migration, and apoptosis. Initiates BMP, inhibin, and TGF-beta signaling pathways by interacting with different ligands including TGFB1, BMP2, BMP5, BMP7 or GDF5. Alternatively, acts as a cell surface coreceptor for BMP ligands, serving to enhance ligand binding by differentially regulating BMPR1A/ALK3 and BMPR1B/ALK6 receptor trafficking. Promotes epithelial cell adhesion, focal adhesion formation and integrin signaling during epithelial cell spreading on fibronectin. By interacting with the scaffolding protein beta-arrestin2/ARRB2, regulates migration or actin cytoskeleton and promotes the activation of CDC42 as well as the inhibition of NF-kappa-B. In gonadotrope cells, acts as an inhibin A coreceptor and regulates follicle-stimulating hormone (FSH) levels and female fertility. Plays a role in the inhibition of directed and random cell migration in epithelial cells by altering the actin cytoskeletal organization. Participates in epithelial-mesenchymal transformation (EMT) upon binding to BMP2 or TGFB2, by activating the PAR6/SMURF1/RHOA pathway. This chain is Transforming growth factor beta receptor type 3 (Tgfbr3), found in Rattus norvegicus (Rat).